The sequence spans 479 residues: Mitochondria-eating protein (479 aa).

Coiled-coil stretches lie at residues 109-161 (ERKL…LATT) and 187-223 (LRRL…RIAR). 2 disordered regions span residues 220–251 (RIAR…GRAR) and 456–479 (RSRS…SRSR). Positions 235-249 (RSPSPLPLRSCSPGR) are enriched in low complexity.

Belongs to the MIEAP family.

It is found in the cytoplasm. Its subcellular location is the cytosol. It localises to the mitochondrion outer membrane. The protein localises to the mitochondrion matrix. Its function is as follows. Key regulator of mitochondrial quality that mediates the repairing or degradation of unhealthy mitochondria in response to mitochondrial damage. Mediator of mitochondrial protein catabolic process (also named MALM) by mediating the degradation of damaged proteins inside mitochondria by promoting the accumulation in the mitochondrial matrix of hydrolases that are characteristic of the lysosomal lumen. Also involved in mitochondrion degradation of damaged mitochondria by promoting the formation of vacuole-like structures (named MIV), which engulf and degrade unhealthy mitochondria by accumulating lysosomes. Binds cardiolipin. May form molecular condensates (non-membrane-bounded organelles) within mitochondria that compartmentalize and promote cardiolipin metabolism. The protein is Mitochondria-eating protein (SPATA18) of Gallus gallus (Chicken).